The sequence spans 326 residues: Centriolar satellite-associated tubulin polyglutamylase complex regulator 1 (326 aa).

A required for interaction with PCM1 region spans residues 1–111 (MLSPERLALP…HCLLQLLCPD (111 aa)). The interval 1 to 225 (MLSPERLALP…SCPPPALVKE (225 aa)) is required for interaction with TPGS1, LRRC49, and TTLL1.

The protein belongs to the CSTPP1 family. As to quaternary structure, interacts with PCM1. Interacts with TTLL1, TPGS1, TPGS2 and LRRC49; the interactions link CSTPP1 to the complex TPGC. Binds to alpha-tubulin.

The protein localises to the cytoplasm. It is found in the cytoskeleton. It localises to the microtubule organizing center. Its subcellular location is the centrosome. The protein resides in the centriolar satellite. Its function is as follows. Regulator of the tubulin polyglutamylase complex (TPGC) that controls cytoskeletal organization, nuclear shape, and cilium disassembly by balancing microtubule and actin assembly. Regulates the assembly and stability of the TPGC and thereby modulates polyglutamylation of the microtubule, which antagonizes MAP4 binding. In Bos taurus (Bovine), this protein is Centriolar satellite-associated tubulin polyglutamylase complex regulator 1 (CSTPP1).